We begin with the raw amino-acid sequence, 308 residues long: D-alanine--D-alanine ligase (308 aa).

The region spanning 103-302 is the ATP-grasp domain; it reads KTVMKTAGVP…FDELVQWMVE (200 aa). 130–184 provides a ligand contact to ATP; the sequence is MEPPYVIKPVADGSSVGVYIITEQHQHPPQELFRDDWAYGDKLLVEKYVAGKELT. Mg(2+) is bound by residues aspartate 252, glutamate 269, and asparagine 271.

The protein belongs to the D-alanine--D-alanine ligase family. Mg(2+) serves as cofactor. Requires Mn(2+) as cofactor.

It is found in the cytoplasm. It carries out the reaction 2 D-alanine + ATP = D-alanyl-D-alanine + ADP + phosphate + H(+). The protein operates within cell wall biogenesis; peptidoglycan biosynthesis. Its function is as follows. Cell wall formation. This is D-alanine--D-alanine ligase from Rhodopseudomonas palustris (strain BisA53).